The chain runs to 86 residues: Neurotoxin-like protein pMD18-NTL1/2/4/5 (86 aa).

The signal sequence occupies residues 1 to 21 (MKTLLLTLVVLTIACLDLGYT). 4 disulfides stabilise this stretch: cysteine 24/cysteine 45, cysteine 38/cysteine 62, cysteine 66/cysteine 78, and cysteine 79/cysteine 84.

The protein belongs to the three-finger toxin family. Short-chain subfamily. Orphan group IX sub-subfamily. As to expression, expressed by the venom gland.

Its subcellular location is the secreted. The protein is Neurotoxin-like protein pMD18-NTL1/2/4/5 of Bungarus multicinctus (Many-banded krait).